The chain runs to 52 residues: Large ribosomal subunit protein bL32c (52 aa).

The protein belongs to the bacterial ribosomal protein bL32 family.

Its subcellular location is the plastid. The protein resides in the chloroplast. The polypeptide is Large ribosomal subunit protein bL32c (Arabis hirsuta (Hairy rock-cress)).